The sequence spans 1074 residues: DNA-directed RNA polymerase subunit beta (1074 aa).

This sequence belongs to the RNA polymerase beta chain family. In plastids the minimal PEP RNA polymerase catalytic core is composed of four subunits: alpha, beta, beta', and beta''. When a (nuclear-encoded) sigma factor is associated with the core the holoenzyme is formed, which can initiate transcription.

Its subcellular location is the plastid. It is found in the chloroplast. It catalyses the reaction RNA(n) + a ribonucleoside 5'-triphosphate = RNA(n+1) + diphosphate. In terms of biological role, DNA-dependent RNA polymerase catalyzes the transcription of DNA into RNA using the four ribonucleoside triphosphates as substrates. In Chara vulgaris (Common stonewort), this protein is DNA-directed RNA polymerase subunit beta.